Consider the following 125-residue polypeptide: Fluoride-specific ion channel FluC (125 aa).

The next 4 helical transmembrane spans lie at 3-23, 33-53, 65-85, and 99-119; these read FILI…VSKV, IPLG…FVLF, FVLF…TFAY, and LVYF…GMVL. Positions 75 and 78 each coordinate Na(+).

It belongs to the fluoride channel Fluc/FEX (TC 1.A.43) family.

It is found in the cell inner membrane. It catalyses the reaction fluoride(in) = fluoride(out). Its activity is regulated as follows. Na(+) is not transported, but it plays an essential structural role and its presence is essential for fluoride channel function. In terms of biological role, fluoride-specific ion channel. Important for reducing fluoride concentration in the cell, thus reducing its toxicity. In Thermosipho melanesiensis (strain DSM 12029 / CIP 104789 / BI429), this protein is Fluoride-specific ion channel FluC.